Reading from the N-terminus, the 749-residue chain is Small G protein signaling modulator 3 (749 aa).

The Rab-GAP TBC domain maps to 114 to 305 (GIPHGMRPQL…RIWDLFFYEG (192 aa)). Phosphoserine is present on Ser406. Residues 415–439 (EDDLEALKAKNIKQTELVADLREAI) adopt a coiled-coil conformation. Positions 480-539 (SHRRRAKALLDFERHDDDELGFRKNDIITIVSQKDEHCWVGELNGLRGWFPAKFVEVLDE) constitute an SH3 domain. An RUN domain is found at 555–718 (GVTDLVRGTL…FAFSLSQDWE (164 aa)).

This sequence belongs to the small G protein signaling modulator family. In terms of assembly, interacts with GJA1. Interaction with GJA1 induces its degradation. Interacts via its RUN domain with the C-terminal region of NF2. Interacts with RAB3A, RAB4A, RAB5A, RAB8A, RAB11A, RAP1A, RAP1B, RAP2A, RAP2B and PDCD6IP. No interaction with RAB27A. In terms of tissue distribution, widely expressed.

It is found in the cytoplasm. May play a cooperative role in NF2-mediated growth suppression of cells. This is Small G protein signaling modulator 3 from Homo sapiens (Human).